Here is a 226-residue protein sequence, read N- to C-terminus: 7-cyano-7-deazaguanine synthase (226 aa).

Position 10–20 (10–20) interacts with ATP; it reads FSGGQDSTTLA. Positions 190, 205, 208, and 211 each coordinate Zn(2+).

Belongs to the QueC family. Requires Zn(2+) as cofactor.

It catalyses the reaction 7-carboxy-7-deazaguanine + NH4(+) + ATP = 7-cyano-7-deazaguanine + ADP + phosphate + H2O + H(+). It functions in the pathway purine metabolism; 7-cyano-7-deazaguanine biosynthesis. Its function is as follows. Catalyzes the ATP-dependent conversion of 7-carboxy-7-deazaguanine (CDG) to 7-cyano-7-deazaguanine (preQ(0)). The polypeptide is 7-cyano-7-deazaguanine synthase (Helicobacter pylori (strain Shi470)).